The following is a 262-amino-acid chain: Cytochrome b mRNA maturase bI2 (262 aa).

It belongs to the LAGLIDADG endonuclease family.

Its subcellular location is the mitochondrion. Functionally, this protein is responsible for splicing and maturation of cytochrome b mRNA. Specifically, it may be responsible for the splicing specificity of the second intron. The sequence is that of Cytochrome b mRNA maturase bI2 (bI2) from Debaryomyces hansenii (strain ATCC 36239 / CBS 767 / BCRC 21394 / JCM 1990 / NBRC 0083 / IGC 2968) (Yeast).